The primary structure comprises 456 residues: Bifunctional protein GlmU (456 aa).

The pyrophosphorylase stretch occupies residues 1–229; sequence MSTSPLSVVI…LSEVEGVNNR (229 aa). UDP-N-acetyl-alpha-D-glucosamine is bound by residues 11 to 14, Lys-25, Gln-76, 81 to 82, 103 to 105, Gly-140, Glu-154, Asn-169, and Asn-227; these read LAAG, GT, and YGD. Residue Asp-105 participates in Mg(2+) binding. Asn-227 lines the Mg(2+) pocket. The interval 230–250 is linker; the sequence is LQLSALERAYQQQQAQRLLLA. Positions 251–456 are N-acetyltransferase; it reads GVMLTDPARF…SGWERPVKKK (206 aa). The UDP-N-acetyl-alpha-D-glucosamine site is built by Arg-333 and Lys-351. His-363 serves as the catalytic Proton acceptor. The UDP-N-acetyl-alpha-D-glucosamine site is built by Tyr-366 and Asn-377. Acetyl-CoA contacts are provided by residues Ala-380, 386 to 387, Ser-405, Ala-423, and Arg-440; that span reads NY.

In the N-terminal section; belongs to the N-acetylglucosamine-1-phosphate uridyltransferase family. This sequence in the C-terminal section; belongs to the transferase hexapeptide repeat family. In terms of assembly, homotrimer. It depends on Mg(2+) as a cofactor.

It localises to the cytoplasm. It catalyses the reaction alpha-D-glucosamine 1-phosphate + acetyl-CoA = N-acetyl-alpha-D-glucosamine 1-phosphate + CoA + H(+). The catalysed reaction is N-acetyl-alpha-D-glucosamine 1-phosphate + UTP + H(+) = UDP-N-acetyl-alpha-D-glucosamine + diphosphate. The protein operates within nucleotide-sugar biosynthesis; UDP-N-acetyl-alpha-D-glucosamine biosynthesis; N-acetyl-alpha-D-glucosamine 1-phosphate from alpha-D-glucosamine 6-phosphate (route II): step 2/2. It functions in the pathway nucleotide-sugar biosynthesis; UDP-N-acetyl-alpha-D-glucosamine biosynthesis; UDP-N-acetyl-alpha-D-glucosamine from N-acetyl-alpha-D-glucosamine 1-phosphate: step 1/1. It participates in bacterial outer membrane biogenesis; LPS lipid A biosynthesis. Functionally, catalyzes the last two sequential reactions in the de novo biosynthetic pathway for UDP-N-acetylglucosamine (UDP-GlcNAc). The C-terminal domain catalyzes the transfer of acetyl group from acetyl coenzyme A to glucosamine-1-phosphate (GlcN-1-P) to produce N-acetylglucosamine-1-phosphate (GlcNAc-1-P), which is converted into UDP-GlcNAc by the transfer of uridine 5-monophosphate (from uridine 5-triphosphate), a reaction catalyzed by the N-terminal domain. This chain is Bifunctional protein GlmU, found in Edwardsiella ictaluri (strain 93-146).